Here is a 267-residue protein sequence, read N- to C-terminus: Pyrroline-5-carboxylate reductase (267 aa).

This sequence belongs to the pyrroline-5-carboxylate reductase family.

The protein resides in the cytoplasm. It carries out the reaction L-proline + NADP(+) = (S)-1-pyrroline-5-carboxylate + NADPH + 2 H(+). It catalyses the reaction L-proline + NAD(+) = (S)-1-pyrroline-5-carboxylate + NADH + 2 H(+). It participates in amino-acid biosynthesis; L-proline biosynthesis; L-proline from L-glutamate 5-semialdehyde: step 1/1. Functionally, catalyzes the reduction of 1-pyrroline-5-carboxylate (PCA) to L-proline. This chain is Pyrroline-5-carboxylate reductase, found in Synechocystis sp. (strain ATCC 27184 / PCC 6803 / Kazusa).